Consider the following 283-residue polypeptide: Zip homologous protein 4 (283 aa).

The RING-type zinc-finger motif lies at 6–50 (CFRCYKFPSKQIEFYLTNCMHMFCIECERLCHPPEEEPLKCIQCS). 2 disordered regions span residues 149-175 (KKQLAEQAPPPQTPPRSNSLKVASSRS) and 201-283 (TKAQ…RNSQ). A compositionally biased stretch (polar residues) spans 163–175 (PRSNSLKVASSRS). Low complexity predominate over residues 202 to 216 (KAQAKAEAEAEAPAK). Over residues 220-235 (SKAQTTKCTSNYQSHP) the composition is skewed to polar residues. A compositionally biased stretch (basic and acidic residues) spans 267–283 (KKHEAQREKHKEHRNSQ).

As to quaternary structure, interacts with zhp-3; the interaction is required for their localization along paired chromosomes and stability, and for the formation of chiasma during meiotic recombination. In terms of tissue distribution, expressed in the germline.

The protein resides in the chromosome. Functionally, recruited co-dependently with zhp-3 to the synaptonemal complex between homologous chromosome pairs to regulate the formation and number of crossover events between homologs during meiotic recombination. In the early stages of pachytene, in complex with zhp-4, recruited by the zhp-1-zhp-2 heterodimer to designated crossover sites along the recombination intermediate to stabilize other pro-crossover factors such as rmh-1, msh-5 and cosa-1. This in turn facilitates crossover and promotes the formation of chiasma in each meiotic nucleus at the late pachytene stage of meiosis. Negatively regulates double strand break formation to promote formation of the crossover intermediate. The sequence is that of Zip homologous protein 4 from Caenorhabditis elegans.